A 147-amino-acid chain; its full sequence is Fibromodulin (147 aa).

LRR repeat units follow at residues 1–15, 16–37, 40–61, 63–84, 85–105, and 108–128; these read LDHN…PLPR, SLRE…ALEG, NLTA…MRGL, SLIL…LPSA, LEQL…YFRG, and KLLY…ASNT. The N-linked (GlcNAc...) asparagine glycan is linked to N5. Residue N40 is glycosylated (N-linked (GlcNAc...) asparagine). N130 is a glycosylation site (N-linked (GlcNAc...) asparagine). An LRR 7 repeat occupies 133–147; it reads SLLELDLSYNQLQKI.

This sequence belongs to the small leucine-rich proteoglycan (SLRP) family. SLRP class II subfamily. In terms of assembly, binds to type I and type II collagen. Post-translationally, binds keratan sulfate chains. Sulfated on tyrosine residues. In terms of processing, the N-terminus is blocked by a pyrrolidone carboxylic acid generated by post-translational modification of N-terminal glutamine.

It is found in the secreted. The protein resides in the extracellular space. The protein localises to the extracellular matrix. Affects the rate of fibrils formation. May have a primary role in collagen fibrillogenesis. This chain is Fibromodulin (FMOD), found in Oryctolagus cuniculus (Rabbit).